Here is a 102-residue protein sequence, read N- to C-terminus: Peptide chaperone MftB (102 aa).

The protein belongs to the peptide chaperone MftB family.

Peptide chaperone involved in the biosynthesis of the enzyme cofactor mycofactocin (MFT). Binds MftA and MftC with high affinity, and is essential for MftC activity on MftA, likely via the formation of a ternary complex. Is required for the in vivo ethanol assimilation in M.smegmatis. The sequence is that of Peptide chaperone MftB from Mycolicibacterium smegmatis (strain ATCC 700084 / mc(2)155) (Mycobacterium smegmatis).